Reading from the N-terminus, the 331-residue chain is Ribose-phosphate pyrophosphokinase (331 aa).

Residue 55 to 57 (DGE) participates in ATP binding. Mg(2+) contacts are provided by histidine 148 and aspartate 187. Residue lysine 211 is part of the active site. D-ribose 5-phosphate contacts are provided by residues arginine 213, aspartate 237, and 241-245 (DTGGT).

This sequence belongs to the ribose-phosphate pyrophosphokinase family. Class I subfamily. In terms of assembly, homohexamer. Mg(2+) serves as cofactor.

The protein resides in the cytoplasm. The catalysed reaction is D-ribose 5-phosphate + ATP = 5-phospho-alpha-D-ribose 1-diphosphate + AMP + H(+). It functions in the pathway metabolic intermediate biosynthesis; 5-phospho-alpha-D-ribose 1-diphosphate biosynthesis; 5-phospho-alpha-D-ribose 1-diphosphate from D-ribose 5-phosphate (route I): step 1/1. In terms of biological role, involved in the biosynthesis of the central metabolite phospho-alpha-D-ribosyl-1-pyrophosphate (PRPP) via the transfer of pyrophosphoryl group from ATP to 1-hydroxyl of ribose-5-phosphate (Rib-5-P). This is Ribose-phosphate pyrophosphokinase from Prochlorococcus marinus subsp. pastoris (strain CCMP1986 / NIES-2087 / MED4).